A 554-amino-acid chain; its full sequence is MTTPDLTGALFEIVARTAGRRPGGDAIALSPDMVVLERPRNRDHGDWATNIAMRIAKPLGESPRTIAADIAKALGELPQVAKVDVAGPGFINITLEAAAAGALAHTIVESGPAYGRGHSLEGIRINLEFVSANPTGPIHLGGVRWAAVGDSLARILQAEGADVTREYYFNDHGSQIDRFARSLLASHLGEETPEDGYGGAYIGEIAERVVEGYEGDIDALTREAQQEVFRKSGTELMFGEIKQKLHDFGVDFDVFFHEDSLHESGAVDRAIARLTELGHVFEEDGAIWLRTTTFGDDRDRVVIRSTGEPAYISGDLGYYLDKRERGFEQNIIMLGADHHGYVGRMMAMVEAFGDTPGVNLQILIGQMVNLLRDGEPVRMSKRAGTIVTLDDLVDAVGVDAGRYALVRSSADQNLDIDLAVLGKRTNDNPVFYVQYAHARTCAVDRNAAASGVDRSAFAPELLTHPTESALLGLLQEFPRIVAQAAELREPHRVARYVEELAGSYHRWYDSCRVVPRGDEEVTDLHRTRLWLNDAVRQVVANGLNLVGVSAPERM.

The 'HIGH' region motif lies at 132–142 (ANPTGPIHLGG).

This sequence belongs to the class-I aminoacyl-tRNA synthetase family. In terms of assembly, monomer.

Its subcellular location is the cytoplasm. It carries out the reaction tRNA(Arg) + L-arginine + ATP = L-arginyl-tRNA(Arg) + AMP + diphosphate. The sequence is that of Arginine--tRNA ligase from Clavibacter sepedonicus (Clavibacter michiganensis subsp. sepedonicus).